The sequence spans 162 residues: Transcription elongation factor GreA (162 aa).

Positions 45 to 74 (ENAEYEAAREKQAFIEGRIKELEDMTARAE) form a coiled coil.

This sequence belongs to the GreA/GreB family.

In terms of biological role, necessary for efficient RNA polymerase transcription elongation past template-encoded arresting sites. The arresting sites in DNA have the property of trapping a certain fraction of elongating RNA polymerases that pass through, resulting in locked ternary complexes. Cleavage of the nascent transcript by cleavage factors such as GreA or GreB allows the resumption of elongation from the new 3'terminus. GreA releases sequences of 2 to 3 nucleotides. The polypeptide is Transcription elongation factor GreA (Rickettsia conorii (strain ATCC VR-613 / Malish 7)).